The primary structure comprises 197 residues: Holliday junction branch migration complex subunit RuvA (197 aa).

The tract at residues 1–64 is domain I; that stretch reads MIALLRGLVV…EDVLALYGFL (64 aa). The interval 65 to 143 is domain II; that stretch reads TQDEKALFEK…AATGEEPGAP (79 aa). Positions 144 to 153 are flexible linker; the sequence is AAEALSPIDQ. The segment at 153–197 is domain III; that stretch reads QDVLSALLNLGCARPQAEAAVRKAKAAGASLDFEPLFRRALELVR.

The protein belongs to the RuvA family. In terms of assembly, homotetramer. Forms an RuvA(8)-RuvB(12)-Holliday junction (HJ) complex. HJ DNA is sandwiched between 2 RuvA tetramers; dsDNA enters through RuvA and exits via RuvB. An RuvB hexamer assembles on each DNA strand where it exits the tetramer. Each RuvB hexamer is contacted by two RuvA subunits (via domain III) on 2 adjacent RuvB subunits; this complex drives branch migration. In the full resolvosome a probable DNA-RuvA(4)-RuvB(12)-RuvC(2) complex forms which resolves the HJ.

The protein resides in the cytoplasm. Its function is as follows. The RuvA-RuvB-RuvC complex processes Holliday junction (HJ) DNA during genetic recombination and DNA repair, while the RuvA-RuvB complex plays an important role in the rescue of blocked DNA replication forks via replication fork reversal (RFR). RuvA specifically binds to HJ cruciform DNA, conferring on it an open structure. The RuvB hexamer acts as an ATP-dependent pump, pulling dsDNA into and through the RuvAB complex. HJ branch migration allows RuvC to scan DNA until it finds its consensus sequence, where it cleaves and resolves the cruciform DNA. The sequence is that of Holliday junction branch migration complex subunit RuvA from Solibacter usitatus (strain Ellin6076).